The primary structure comprises 93 residues: Aspartyl/glutamyl-tRNA(Asn/Gln) amidotransferase subunit C (93 aa).

It belongs to the GatC family. In terms of assembly, heterotrimer of A, B and C subunits.

The enzyme catalyses L-glutamyl-tRNA(Gln) + L-glutamine + ATP + H2O = L-glutaminyl-tRNA(Gln) + L-glutamate + ADP + phosphate + H(+). The catalysed reaction is L-aspartyl-tRNA(Asn) + L-glutamine + ATP + H2O = L-asparaginyl-tRNA(Asn) + L-glutamate + ADP + phosphate + 2 H(+). Functionally, allows the formation of correctly charged Asn-tRNA(Asn) or Gln-tRNA(Gln) through the transamidation of misacylated Asp-tRNA(Asn) or Glu-tRNA(Gln) in organisms which lack either or both of asparaginyl-tRNA or glutaminyl-tRNA synthetases. The reaction takes place in the presence of glutamine and ATP through an activated phospho-Asp-tRNA(Asn) or phospho-Glu-tRNA(Gln). The chain is Aspartyl/glutamyl-tRNA(Asn/Gln) amidotransferase subunit C from Methanocella arvoryzae (strain DSM 22066 / NBRC 105507 / MRE50).